The following is a 332-amino-acid chain: Cysteine and histidine-rich domain-containing protein 1 (332 aa).

Ala2 bears the N-acetylalanine mark. Residues 2–77 are interaction with PPP5C; the sequence is ALLCYNRGCG…KPPEPVKPEV (76 aa). 6 residues coordinate Zn(2+): Cys5, Cys10, Cys24, His27, Cys42, and Cys43. CHORD domains lie at 5-64 and 157-216; these read CYNR…KGRH and CKNG…TGKH. Phosphothreonine is present on Thr47. Position 51 is a phosphoserine (Ser51). 10 residues coordinate Zn(2+): Cys59, His64, Cys157, Cys162, Cys176, His179, Cys194, Cys195, Cys211, and His216. The disordered stretch occupies residues 61–82; sequence KGRHNSEKPPEPVKPEVKTTEK. Positions 64-82 are enriched in basic and acidic residues; it reads HNSEKPPEPVKPEVKTTEK. The interval 65 to 316 is interaction with HSP90AA1 and HSP90AB1; sequence NSEKPPEPVK…AEPMQWASLE (252 aa). A CS domain is found at 227 to 316; sequence VVPCRHDWHQ…AEPMQWASLE (90 aa).

As to quaternary structure, interacts with HSP90AA1, HSP90AB1, PPP5C, ROCK1 and ROCK2.

Regulates centrosome duplication, probably by inhibiting the kinase activity of ROCK2. Proposed to act as co-chaperone for HSP90. May play a role in the regulation of NOD1 via a HSP90 chaperone complex. In vitro, has intrinsic chaperone activity. This function may be achieved by inhibiting association of ROCK2 with NPM1. Plays a role in ensuring the localization of the tyrosine kinase receptor EGFR to the plasma membrane, and thus ensures the subsequent regulation of EGFR activity and EGF-induced actin cytoskeleton remodeling. Involved in stress response. Prevents tumorigenesis. This chain is Cysteine and histidine-rich domain-containing protein 1 (CHORDC1), found in Sus scrofa (Pig).